The chain runs to 119 residues: MIGIDIVSIARVEKCVKRFEMKFLERFLSPSEIVLCKDKTSSIAGFFALKEACSKALQVGIGKELSFLDIRISKSPKNAPLITLSKEKMDYFNIQSLSASISHDAGFAIAVVMVSSSNL.

Residues Asp-5 and Glu-51 each coordinate Mg(2+).

Belongs to the P-Pant transferase superfamily. AcpS family. Requires Mg(2+) as cofactor.

The protein localises to the cytoplasm. The catalysed reaction is apo-[ACP] + CoA = holo-[ACP] + adenosine 3',5'-bisphosphate + H(+). Functionally, transfers the 4'-phosphopantetheine moiety from coenzyme A to a Ser of acyl-carrier-protein. The chain is Holo-[acyl-carrier-protein] synthase from Helicobacter pylori (strain G27).